Here is a 295-residue protein sequence, read N- to C-terminus: uncharacterized protein (295 aa).

Positions 1-26 are cleaved as a signal peptide; the sequence is MKKYLALAAIVAICALWLTQNSNFEA.

This is an uncharacterized protein from Archaeoglobus fulgidus (strain ATCC 49558 / DSM 4304 / JCM 9628 / NBRC 100126 / VC-16).